The primary structure comprises 289 residues: MSTTFKLDTSTSRANPTPAPMKRLTVPKIRARKKDGKTEEPLVMLTAYTARQAQLLDAHCDLLLVGDSLGQVIYGLPSTIPVTLRMMADHAAAVVRGSYHSVVVVDMPFGSYEQSPQQAFESASFLLKESGAAAVKLEGGEAMAETVAFLNQRGIPVMGHVGLTPQAVNVLGGYAARGRNDAEADKIVTDAKALDDAGAFAIVIEGVLEPIAVAATEAVRAPTIGIGASAQCDGQVLVTEDMLGMFERVPRFVKKYGDIAETIEATAKTYAEEVRARSFPGPEQLYQPK.

Residues 1–15 (MSTTFKLDTSTSRAN) are compositionally biased toward polar residues. The segment at 1–21 (MSTTFKLDTSTSRANPTPAPM) is disordered. Mg(2+) contacts are provided by D67 and D106. 3-methyl-2-oxobutanoate-binding positions include 67–68 (DS), D106, and K136. Residue E138 coordinates Mg(2+). Residue E205 is the Proton acceptor of the active site.

This sequence belongs to the PanB family. As to quaternary structure, homodecamer; pentamer of dimers. Requires Mg(2+) as cofactor.

The protein resides in the cytoplasm. The catalysed reaction is 3-methyl-2-oxobutanoate + (6R)-5,10-methylene-5,6,7,8-tetrahydrofolate + H2O = 2-dehydropantoate + (6S)-5,6,7,8-tetrahydrofolate. It functions in the pathway cofactor biosynthesis; (R)-pantothenate biosynthesis; (R)-pantoate from 3-methyl-2-oxobutanoate: step 1/2. Functionally, catalyzes the reversible reaction in which hydroxymethyl group from 5,10-methylenetetrahydrofolate is transferred onto alpha-ketoisovalerate to form ketopantoate. This Erythrobacter litoralis (strain HTCC2594) protein is 3-methyl-2-oxobutanoate hydroxymethyltransferase.